Reading from the N-terminus, the 540-residue chain is NADH-quinone oxidoreductase subunit N (540 aa).

Transmembrane regions (helical) follow at residues 24–44, 54–74, 88–108, 158–178, 184–204, 219–239, 263–283, 295–315, 331–351, 357–377, 385–405, 428–448, 462–482, and 505–525; these read LSPM…EAFL, LVLA…LAGT, PTLF…LIIA, APGH…MLLF, LLTM…LCGL, YFLL…LLYG, ALIG…AVPF, PTPI…GAML, PVMW…AVTQ, MLAY…VAAN, MFYL…VTLV, VGGV…TSGF, GAVP…FFYV, and MFTA…GILP.

Belongs to the complex I subunit 2 family. As to quaternary structure, NDH-1 is composed of 14 different subunits. Subunits NuoA, H, J, K, L, M, N constitute the membrane sector of the complex.

Its subcellular location is the cell membrane. It catalyses the reaction a quinone + NADH + 5 H(+)(in) = a quinol + NAD(+) + 4 H(+)(out). NDH-1 shuttles electrons from NADH, via FMN and iron-sulfur (Fe-S) centers, to quinones in the respiratory chain. The immediate electron acceptor for the enzyme in this species is believed to be a menaquinone. Couples the redox reaction to proton translocation (for every two electrons transferred, four hydrogen ions are translocated across the cytoplasmic membrane), and thus conserves the redox energy in a proton gradient. This Rhodococcus opacus (strain B4) protein is NADH-quinone oxidoreductase subunit N.